Consider the following 139-residue polypeptide: Cystatin cpi-1 (139 aa).

The first 19 residues, Met1–Cys19, serve as a signal peptide directing secretion. The N-linked (GlcNAc...) asparagine glycan is linked to Asn29. Positions Gln65 to Gly69 match the Secondary area of contact motif. An intrachain disulfide couples Cys83 to Cys99.

Belongs to the cystatin family.

Its function is as follows. Cysteine protease inhibitor which inhibits members of the peptidase C1 family. Does not inhibit asparaginyl endopeptidase. May play a protective role against exogenous cysteine proteases derived from soil bacteria or fungi, or rotting fruits and vegetation. In Caenorhabditis elegans, this protein is Cystatin cpi-1.